We begin with the raw amino-acid sequence, 217 residues long: MRLRHKPYAMDRINEYSHFVIGNPEERAGNWKEVFGNEQPIHIEVGTGRGRFMYDMAKANPHINYIGIEKFTSVVVDALDKLIEEELPNLKLINKDAEDLTVFFAKGEIDRVYLNFSDPWPKKRHTKRRLTYKTFLRNYEEVLVEGGEIHFKTDNQGLFEYSLMSMAEYGMLLTYLSLDLHNSDFEGNIMTEYEEKFSSKGHRIYRVEAKYRTEPMQ.

S-adenosyl-L-methionine contacts are provided by E44, E69, D96, and D118. D118 is an active-site residue. Substrate is bound by residues K122, D154, and T191 to E194.

Belongs to the class I-like SAM-binding methyltransferase superfamily. TrmB family.

It catalyses the reaction guanosine(46) in tRNA + S-adenosyl-L-methionine = N(7)-methylguanosine(46) in tRNA + S-adenosyl-L-homocysteine. It functions in the pathway tRNA modification; N(7)-methylguanine-tRNA biosynthesis. Functionally, catalyzes the formation of N(7)-methylguanine at position 46 (m7G46) in tRNA. The polypeptide is tRNA (guanine-N(7)-)-methyltransferase (Bacillus thuringiensis (strain Al Hakam)).